A 297-amino-acid polypeptide reads, in one-letter code: Protein phosphatase PTC7 homolog (297 aa).

The N-terminal 27 residues, M1–Y27, are a transit peptide targeting the mitochondrion. A PPM-type phosphatase domain is found at S28–V292. Positions 71, 72, and 216 each coordinate Mn(2+).

The protein belongs to the PP2C family. Requires Mg(2+) as cofactor. It depends on Mn(2+) as a cofactor.

It is found in the mitochondrion matrix. It catalyses the reaction O-phospho-L-seryl-[protein] + H2O = L-seryl-[protein] + phosphate. The enzyme catalyses O-phospho-L-threonyl-[protein] + H2O = L-threonyl-[protein] + phosphate. In terms of biological role, protein phosphatase which positively regulates biosynthesis of the ubiquinone, coenzyme Q. Dephosphorylates the ubiquinone biosynthesis protein coq7 which is likely to lead to its activation. The chain is Protein phosphatase PTC7 homolog (pptc7) from Danio rerio (Zebrafish).